The primary structure comprises 338 residues: MYKNWRELIKPKRLQVDADSLSDTYGKFMAEPFERGFGTTLGNSLRRVLLSSLQGAAITSVRIKGVLHEFSNIPGVTEDVTDIILNLKGVLLKLHGSDSRNIRIVKKGAGVITAADIITDSHVDVLNPDHHILTCGKDADIELDMVVAMGKGYVPAERNRDDKAPVGTIPIDSLFSPVKKVNFTVTNARVGQITDYDKLILEVLTDGSVRPDDGVAYAAKILKEQLQIFINFDEETETVVEEESEESRKINENLYRSVEELELSVRSANCLKNANIHLIGDLVQRSEAEMLKTQNFGRKSLNEIKDILAEMGLSLGMMLENFPDPEYLKMIQEGKEDL.

The segment at 1–233 (MYKNWRELIK…EQLQIFINFD (233 aa)) is alpha N-terminal domain (alpha-NTD). Positions 250 to 338 (INENLYRSVE…KMIQEGKEDL (89 aa)) are alpha C-terminal domain (alpha-CTD).

Belongs to the RNA polymerase alpha chain family. In terms of assembly, homodimer. The RNAP catalytic core consists of 2 alpha, 1 beta, 1 beta' and 1 omega subunit. When a sigma factor is associated with the core the holoenzyme is formed, which can initiate transcription.

The enzyme catalyses RNA(n) + a ribonucleoside 5'-triphosphate = RNA(n+1) + diphosphate. Functionally, DNA-dependent RNA polymerase catalyzes the transcription of DNA into RNA using the four ribonucleoside triphosphates as substrates. The polypeptide is DNA-directed RNA polymerase subunit alpha (Syntrophotalea carbinolica (strain DSM 2380 / NBRC 103641 / GraBd1) (Pelobacter carbinolicus)).